Reading from the N-terminus, the 313-residue chain is Glucan 1,3-beta-glucosidase (313 aa).

Residues M1–A23 form the signal peptide. E124 acts as the Proton donor in catalysis. N202 is a glycosylation site (N-linked (GlcNAc...) asparagine). E233 functions as the Nucleophile in the catalytic mechanism. N284 carries N-linked (GlcNAc...) asparagine glycosylation.

The protein belongs to the glycosyl hydrolase 17 family.

The protein resides in the secreted. The protein localises to the cell wall. The catalysed reaction is Successive hydrolysis of beta-D-glucose units from the non-reducing ends of (1-&gt;3)-beta-D-glucans, releasing alpha-glucose.. Glucanases possibly play a role in cell expansion during growth, in cell-cell fusion during mating, and in spore release during sporulation. This enzyme may be involved in beta-glucan degradation and also function biosynthetically as a transglycosylase. The chain is Glucan 1,3-beta-glucosidase (BGL2) from Saccharomyces cerevisiae (strain ATCC 204508 / S288c) (Baker's yeast).